The chain runs to 690 residues: Ligand of Numb protein X 2 (690 aa).

The RING-type zinc-finger motif lies at 50–88 (CHICLQPLLQPLDTPCGHTFCYKCLRNFLQEKDFCPLDR). The tract at residues 198 to 224 (STWSEEPGLDNPAFEESAGADTTQQPL) is disordered. The NPXY motif signature appears at 208–211 (NPAF). 4 PDZ domains span residues 233 to 318 (TIEI…LRER), 339 to 422 (QVAL…ARPG), 468 to 554 (HITV…KALE), and 600 to 688 (DIVL…WPGS). Residues 418–455 (IARPGKPQPGNTIREAGNHSSSSQHHTPPPYYSRPSSH) form a disordered region.

Interacts with the phosphotyrosine interaction domain of NUMB.

In Homo sapiens (Human), this protein is Ligand of Numb protein X 2 (LNX2).